The chain runs to 492 residues: NADH-quinone oxidoreductase subunit N (492 aa).

The next 14 membrane-spanning stretches (helical) occupy residues 18 to 38, 45 to 65, 80 to 100, 108 to 128, 133 to 153, 167 to 187, 209 to 229, 250 to 270, 277 to 297, 305 to 325, 333 to 353, 381 to 401, 415 to 435, and 464 to 484; these read ILPM…NAFT, LNMF…LGLE, LSLV…FLAL, FQTA…QFMV, LLLM…LMAL, FTMG…FYLL, MLFA…VSLV, ISIV…GAFI, VEDI…LIAL, MLAY…FIHT, FVYW…LWLL, VAIL…FSVF, NHIL…FYYF, and MPIY…VFMM.

It belongs to the complex I subunit 2 family. In terms of assembly, NDH-1 is composed of 14 different subunits. Subunits NuoA, H, J, K, L, M, N constitute the membrane sector of the complex.

It is found in the cell inner membrane. It carries out the reaction a quinone + NADH + 5 H(+)(in) = a quinol + NAD(+) + 4 H(+)(out). Its function is as follows. NDH-1 shuttles electrons from NADH, via FMN and iron-sulfur (Fe-S) centers, to quinones in the respiratory chain. The immediate electron acceptor for the enzyme in this species is believed to be ubiquinone. Couples the redox reaction to proton translocation (for every two electrons transferred, four hydrogen ions are translocated across the cytoplasmic membrane), and thus conserves the redox energy in a proton gradient. The sequence is that of NADH-quinone oxidoreductase subunit N from Helicobacter acinonychis (strain Sheeba).